The following is a 1127-amino-acid chain: Carbamoyl phosphate synthase large chain (1127 aa).

Positions 1–402 (MPKRTDIKSV…SLGKAMRSID (402 aa)) are carboxyphosphate synthetic domain. Arginine 129, arginine 169, glycine 175, glycine 176, glutamate 208, isoleucine 210, glutamate 215, glycine 241, valine 242, histidine 243, glutamine 285, and glutamate 299 together coordinate ATP. Residues 133–328 (KKVVDEAGAE…IAKIATKLAL (196 aa)) enclose the ATP-grasp 1 domain. 3 residues coordinate Mg(2+): glutamine 285, glutamate 299, and asparagine 301. 3 residues coordinate Mn(2+): glutamine 285, glutamate 299, and asparagine 301. The segment at 403 to 551 (KRHMGFNWDG…YYYSCYADET (149 aa)) is oligomerization domain. Residues 552-962 (ELRPREREAV…AFAKSQLAAY (411 aa)) are carbamoyl phosphate synthetic domain. The region spanning 681-881 (GEVLKKAEMN…LAKAAARIMA (201 aa)) is the ATP-grasp 2 domain. Arginine 717, lysine 765, leucine 767, glutamate 772, glycine 797, valine 798, histidine 799, serine 800, glutamine 840, and glutamate 852 together coordinate ATP. Mg(2+) is bound by residues glutamine 840, glutamate 852, and asparagine 854. 3 residues coordinate Mn(2+): glutamine 840, glutamate 852, and asparagine 854. The allosteric domain stretch occupies residues 963 to 1127 (DGGLPTHGNV…QLFELERREF (165 aa)). One can recognise an MGS-like domain in the interval 964 to 1127 (GGLPTHGNVF…QLFELERREF (164 aa)).

This sequence belongs to the CarB family. As to quaternary structure, composed of two chains; the small (or glutamine) chain promotes the hydrolysis of glutamine to ammonia, which is used by the large (or ammonia) chain to synthesize carbamoyl phosphate. Tetramer of heterodimers (alpha,beta)4. Requires Mg(2+) as cofactor. It depends on Mn(2+) as a cofactor.

The enzyme catalyses hydrogencarbonate + L-glutamine + 2 ATP + H2O = carbamoyl phosphate + L-glutamate + 2 ADP + phosphate + 2 H(+). It catalyses the reaction hydrogencarbonate + NH4(+) + 2 ATP = carbamoyl phosphate + 2 ADP + phosphate + 2 H(+). The protein operates within amino-acid biosynthesis; L-arginine biosynthesis; carbamoyl phosphate from bicarbonate: step 1/1. Its pathway is pyrimidine metabolism; UMP biosynthesis via de novo pathway; (S)-dihydroorotate from bicarbonate: step 1/3. Functionally, large subunit of the glutamine-dependent carbamoyl phosphate synthetase (CPSase). CPSase catalyzes the formation of carbamoyl phosphate from the ammonia moiety of glutamine, carbonate, and phosphate donated by ATP, constituting the first step of 2 biosynthetic pathways, one leading to arginine and/or urea and the other to pyrimidine nucleotides. The large subunit (synthetase) binds the substrates ammonia (free or transferred from glutamine from the small subunit), hydrogencarbonate and ATP and carries out an ATP-coupled ligase reaction, activating hydrogencarbonate by forming carboxy phosphate which reacts with ammonia to form carbamoyl phosphate. In Bifidobacterium longum (strain DJO10A), this protein is Carbamoyl phosphate synthase large chain.